The following is a 62-amino-acid chain: Large ribosomal subunit protein uL30 (62 aa).

It belongs to the universal ribosomal protein uL30 family. As to quaternary structure, part of the 50S ribosomal subunit.

The polypeptide is Large ribosomal subunit protein uL30 (Halalkalibacterium halodurans (strain ATCC BAA-125 / DSM 18197 / FERM 7344 / JCM 9153 / C-125) (Bacillus halodurans)).